Consider the following 174-residue polypeptide: NADH-quinone oxidoreductase subunit B 2 (174 aa).

Cysteine 51, cysteine 52, cysteine 116, and cysteine 145 together coordinate [4Fe-4S] cluster.

It belongs to the complex I 20 kDa subunit family. As to quaternary structure, NDH-1 is composed of 14 different subunits. Subunits NuoB, C, D, E, F, and G constitute the peripheral sector of the complex. Requires [4Fe-4S] cluster as cofactor.

It localises to the cell inner membrane. It carries out the reaction a quinone + NADH + 5 H(+)(in) = a quinol + NAD(+) + 4 H(+)(out). In terms of biological role, NDH-1 shuttles electrons from NADH, via FMN and iron-sulfur (Fe-S) centers, to quinones in the respiratory chain. The immediate electron acceptor for the enzyme in this species is believed to be ubiquinone. Couples the redox reaction to proton translocation (for every two electrons transferred, four hydrogen ions are translocated across the cytoplasmic membrane), and thus conserves the redox energy in a proton gradient. The protein is NADH-quinone oxidoreductase subunit B 2 of Thermodesulfovibrio yellowstonii (strain ATCC 51303 / DSM 11347 / YP87).